A 53-amino-acid chain; its full sequence is ASDGRNAVVHERAPELVVTATTTCCGYDPMTICPPCMCTHSCPPKRKPGRRND.

A propeptide spanning residues 1–12 (ASDGRNAVVHER) is cleaved from the precursor. Pro14 is modified (4-hydroxyproline). 4-carboxyglutamate is present on Glu15. Residues Thr19 and Thr21 are each glycosylated (O-linked (HexNAc...) threonine). 4-hydroxyproline occurs at positions 29, 34, 35, 43, 44, and 48. Pro48 carries the post-translational modification Proline amide. Residues 49-53 (GRRND) constitute a propeptide that is removed on maturation.

The protein belongs to the conotoxin A superfamily. Contains 3 disulfide bonds. In terms of tissue distribution, expressed by the venom duct.

It localises to the secreted. In terms of biological role, probable neurotoxin with ion channel inhibitor activity. This is Conotoxin Bu27 from Conus bullatus (Bubble cone).